We begin with the raw amino-acid sequence, 221 residues long: Large ribosomal subunit protein uL4 (221 aa).

The segment at 47–77 (GTASTKTRGEVSGGGRKPWIQKHTGRARQGS) is disordered.

This sequence belongs to the universal ribosomal protein uL4 family. Part of the 50S ribosomal subunit.

In terms of biological role, one of the primary rRNA binding proteins, this protein initially binds near the 5'-end of the 23S rRNA. It is important during the early stages of 50S assembly. It makes multiple contacts with different domains of the 23S rRNA in the assembled 50S subunit and ribosome. Functionally, forms part of the polypeptide exit tunnel. The protein is Large ribosomal subunit protein uL4 of Thermosipho melanesiensis (strain DSM 12029 / CIP 104789 / BI429).